The sequence spans 265 residues: NAD kinase (265 aa).

Aspartate 45 functions as the Proton acceptor in the catalytic mechanism. NAD(+) is bound by residues 45-46, 122-123, arginine 148, aspartate 150, 161-166, and alanine 185; these read DG, NE, and TAYSKS.

The protein belongs to the NAD kinase family. A divalent metal cation is required as a cofactor.

It is found in the cytoplasm. It catalyses the reaction NAD(+) + ATP = ADP + NADP(+) + H(+). Its function is as follows. Involved in the regulation of the intracellular balance of NAD and NADP, and is a key enzyme in the biosynthesis of NADP. Catalyzes specifically the phosphorylation on 2'-hydroxyl of the adenosine moiety of NAD to yield NADP. The polypeptide is NAD kinase (Lactobacillus delbrueckii subsp. bulgaricus (strain ATCC 11842 / DSM 20081 / BCRC 10696 / JCM 1002 / NBRC 13953 / NCIMB 11778 / NCTC 12712 / WDCM 00102 / Lb 14)).